The chain runs to 440 residues: Glyceraldehyde-3-phosphate dehydrogenase, testis-specific (440 aa).

The testis-specific N-terminal extension stretch occupies residues 1–105 (MSRRDVVLTN…PPPPPLQKPA (105 aa)). Composition is skewed to pro residues over residues 40 to 75 (PPKL…PPQI) and 83 to 102 (APPP…PPLQ). Residues 40–106 (PPKLEDPPPT…PPPPLQKPAR (67 aa)) form a disordered region. NAD(+) is bound by residues 117-118 (RI), D138, K183, Y205, and T225. D-glyceraldehyde 3-phosphate is bound by residues 255–257 (SCT), T286, 315–316 (TG), and R338. The active-site Nucleophile is the C256. Position 358 is a phosphoserine (S358). N420 lines the NAD(+) pocket.

This sequence belongs to the glyceraldehyde-3-phosphate dehydrogenase family. As to quaternary structure, homotetramer. In terms of tissue distribution, testis specific.

The protein resides in the cytoplasm. The catalysed reaction is D-glyceraldehyde 3-phosphate + phosphate + NAD(+) = (2R)-3-phospho-glyceroyl phosphate + NADH + H(+). It participates in carbohydrate degradation; glycolysis; pyruvate from D-glyceraldehyde 3-phosphate: step 1/5. May play an important role in regulating the switch between different pathways for energy production during spermiogenesis and in the spermatozoon. Required for sperm motility and male fertility. This is Glyceraldehyde-3-phosphate dehydrogenase, testis-specific (Gapdhs) from Mus musculus (Mouse).